Here is a 262-residue protein sequence, read N- to C-terminus: Phosphonates import ATP-binding protein PhnC (262 aa).

Residues 5 to 253 enclose the ABC transporter domain; the sequence is IRVEKLAKTF…RFDHLYRSIN (249 aa). 37–44 provides a ligand contact to ATP; it reads GPSGSGKS.

It belongs to the ABC transporter superfamily. Phosphonates importer (TC 3.A.1.9.1) family. In terms of assembly, the complex is composed of two ATP-binding proteins (PhnC), two transmembrane proteins (PhnE) and a solute-binding protein (PhnD).

It localises to the cell inner membrane. The enzyme catalyses phosphonate(out) + ATP + H2O = phosphonate(in) + ADP + phosphate + H(+). Its function is as follows. Part of the ABC transporter complex PhnCDE involved in phosphonates import. Responsible for energy coupling to the transport system. This is Phosphonates import ATP-binding protein PhnC from Escherichia coli O6:H1 (strain CFT073 / ATCC 700928 / UPEC).